The following is a 597-amino-acid chain: NADPH-dependent diflavin oxidoreductase 1 (597 aa).

A Flavodoxin-like domain is found at 6–150 (LLVLFGSQTG…AVDPWLRDLW (145 aa)). FMN-binding positions include 12 to 17 (SQTGTA), 59 to 62 (ATTG), 97 to 106 (LGDSSYAKFN), and aspartate 132. Residues 188–207 (GSEGQRVAHPGSQEPPSESK) form a disordered region. An FAD-binding FR-type domain is found at 206–447 (SKPFLAPMIS…VRPGSLAFPE (242 aa)). FAD contacts are provided by residues arginine 350, 382–385 (RAFS), and 416–419 (GLCS). NADP(+)-binding positions include threonine 460, 515 to 516 (SR), 521 to 525 (KVYVQ), and aspartate 558. Tryptophan 596 contributes to the FAD binding site.

It belongs to the NADPH-dependent diflavin oxidoreductase NDOR1 family. In the N-terminal section; belongs to the flavodoxin family. This sequence in the C-terminal section; belongs to the flavoprotein pyridine nucleotide cytochrome reductase family. Interacts with CIAPIN1; as part of the cytosolic iron-sulfur (Fe-S) protein assembly (CIA) machinery. Interacts with DCPS. It depends on FAD as a cofactor. The cofactor is FMN. As to expression, low expression in brain, heart, kidney, pancreas, prostate and skeletal muscle. Highest levels in the placenta. Expressed in cancer cell lines including promyelocytic leukemia, HeLaS3, chronic myelagenous leukemia, lymphoblastic leukemia, Burkitt's lymphoma, colorectal adenocarcinoma, lung carcinoma, and melanoma G-361.

The protein localises to the cytoplasm. The protein resides in the perinuclear region. It catalyses the reaction 2 oxidized [2Fe-2S]-[protein] + NADPH = 2 reduced [2Fe-2S]-[protein] + NADP(+) + H(+). In terms of biological role, NADPH-dependent reductase which is a central component of the cytosolic iron-sulfur (Fe-S) protein assembly (CIA) machinery. Transfers electrons from NADPH via its FAD and FMN prosthetic groups to the [2Fe-2S] cluster of CIAPIN1, another key component of the CIA machinery. In turn, this reduced cluster provides electrons for assembly of cytosolic iron-sulfur cluster proteins. It can also reduce the [2Fe-2S] cluster of CISD1 and activate this protein implicated in Fe/S cluster repair. In vitro can fully activate methionine synthase/MTR in the presence of soluble cytochrome b5/CYB5A. The chain is NADPH-dependent diflavin oxidoreductase 1 from Homo sapiens (Human).